The following is a 184-amino-acid chain: 1,6-anhydro-N-acetylmuramyl-L-alanine amidase AmpD (184 aa).

Residues Gln-30 to Gly-171 enclose the N-acetylmuramoyl-L-alanine amidase domain. His-38 is a binding site for Zn(2+). The active-site Proton acceptor is Glu-120. The Zn(2+) site is built by His-159 and Asp-169.

It belongs to the N-acetylmuramoyl-L-alanine amidase 2 family. Zn(2+) serves as cofactor.

It localises to the cytoplasm. The catalysed reaction is Hydrolyzes the link between N-acetylmuramoyl residues and L-amino acid residues in certain cell-wall glycopeptides.. In terms of biological role, involved in cell wall peptidoglycan recycling. Specifically cleaves the amide bond between the lactyl group of N-acetylmuramic acid and the alpha-amino group of the L-alanine in degradation products containing an anhydro N-acetylmuramyl moiety. This is 1,6-anhydro-N-acetylmuramyl-L-alanine amidase AmpD (ampD) from Haemophilus influenzae (strain ATCC 51907 / DSM 11121 / KW20 / Rd).